Here is a 171-residue protein sequence, read N- to C-terminus: Small ribosomal subunit protein uS5 (171 aa).

Positions leucine 15 to valine 78 constitute an S5 DRBM domain.

The protein belongs to the universal ribosomal protein uS5 family. As to quaternary structure, part of the 30S ribosomal subunit. Contacts proteins S4 and S8.

Its function is as follows. With S4 and S12 plays an important role in translational accuracy. Functionally, located at the back of the 30S subunit body where it stabilizes the conformation of the head with respect to the body. This Phocaeicola vulgatus (strain ATCC 8482 / DSM 1447 / JCM 5826 / CCUG 4940 / NBRC 14291 / NCTC 11154) (Bacteroides vulgatus) protein is Small ribosomal subunit protein uS5.